Consider the following 336-residue polypeptide: Holliday junction branch migration complex subunit RuvB (336 aa).

A large ATPase domain (RuvB-L) region spans residues 4–184; that stretch reads ADRLISADAI…FGIVQRLEFY (181 aa). ATP-binding positions include R24, G65, K68, T69, T70, 131–133, R174, Y184, and R221; that span reads EDY. Mg(2+) is bound at residue T69. The small ATPAse domain (RuvB-S) stretch occupies residues 185-255; it reads NVADLQYIVG…VATQALDMLA (71 aa). Positions 258–336 are head domain (RuvB-H); it reads TEGFDYMDRK…HFGLTREDLG (79 aa). DNA is bound by residues R294, R313, and R318.

This sequence belongs to the RuvB family. As to quaternary structure, homohexamer. Forms an RuvA(8)-RuvB(12)-Holliday junction (HJ) complex. HJ DNA is sandwiched between 2 RuvA tetramers; dsDNA enters through RuvA and exits via RuvB. An RuvB hexamer assembles on each DNA strand where it exits the tetramer. Each RuvB hexamer is contacted by two RuvA subunits (via domain III) on 2 adjacent RuvB subunits; this complex drives branch migration. In the full resolvosome a probable DNA-RuvA(4)-RuvB(12)-RuvC(2) complex forms which resolves the HJ.

The protein resides in the cytoplasm. It catalyses the reaction ATP + H2O = ADP + phosphate + H(+). Functionally, the RuvA-RuvB-RuvC complex processes Holliday junction (HJ) DNA during genetic recombination and DNA repair, while the RuvA-RuvB complex plays an important role in the rescue of blocked DNA replication forks via replication fork reversal (RFR). RuvA specifically binds to HJ cruciform DNA, conferring on it an open structure. The RuvB hexamer acts as an ATP-dependent pump, pulling dsDNA into and through the RuvAB complex. RuvB forms 2 homohexamers on either side of HJ DNA bound by 1 or 2 RuvA tetramers; 4 subunits per hexamer contact DNA at a time. Coordinated motions by a converter formed by DNA-disengaged RuvB subunits stimulates ATP hydrolysis and nucleotide exchange. Immobilization of the converter enables RuvB to convert the ATP-contained energy into a lever motion, pulling 2 nucleotides of DNA out of the RuvA tetramer per ATP hydrolyzed, thus driving DNA branch migration. The RuvB motors rotate together with the DNA substrate, which together with the progressing nucleotide cycle form the mechanistic basis for DNA recombination by continuous HJ branch migration. Branch migration allows RuvC to scan DNA until it finds its consensus sequence, where it cleaves and resolves cruciform DNA. The protein is Holliday junction branch migration complex subunit RuvB of Pectobacterium carotovorum subsp. carotovorum (strain PC1).